The chain runs to 355 residues: Protein RecA (355 aa).

72–79 (GPESSGKT) serves as a coordination point for ATP.

The protein belongs to the RecA family.

The protein resides in the cytoplasm. Can catalyze the hydrolysis of ATP in the presence of single-stranded DNA, the ATP-dependent uptake of single-stranded DNA by duplex DNA, and the ATP-dependent hybridization of homologous single-stranded DNAs. It interacts with LexA causing its activation and leading to its autocatalytic cleavage. This chain is Protein RecA, found in Wolbachia pipientis subsp. Culex pipiens (strain wPip).